The chain runs to 187 residues: uncharacterized protein (187 aa).

Helical transmembrane passes span 29-50 (IFIDIFIGVWAFILAVVWVYWI), 70-92 (FVIGYFLTFVIVAWLTSAAINAY), 128-147 (IFFALTFFSIGVISDFSVLR), and 154-176 (LALVYFVCLFGFIIWIGLAISYL).

Its subcellular location is the cell membrane. This is an uncharacterized protein from Archaeoglobus fulgidus (strain ATCC 49558 / DSM 4304 / JCM 9628 / NBRC 100126 / VC-16).